The sequence spans 242 residues: Transcriptional regulatory protein GltR (242 aa).

The Response regulatory domain occupies 7 to 123; sequence SILLVDDDQE…ELLARIKALL (117 aa). D56 carries the post-translational modification 4-aspartylphosphate. Residues 134–234 constitute a DNA-binding region (ompR/PhoB-type); sequence GDVLAFEDWR…VRGSGYLLAA (101 aa).

In terms of processing, phosphorylated by GtrS.

The protein resides in the cytoplasm. With respect to regulation, phosphorylation of GltR induces its dissociation from DNA leading to transcriptional activation. Member of the two-component regulatory system GtrS/GltR involved in the regulation of glucose metabolism and transport, as well as regulation of the exotoxin A gene expression. GltR controls the transcription of genes involved in glucose metabolism (glk and edd/gap-1) and transport (oprB) as well as the expression of toxA that encodes exotoxin A, the primary virulence factor. Acts as a repressor that is released from its target operators upon phosphorylation. Its function is as follows. Contributes to modulation of the type III secretion system (T3SS) in response to host cells via the regulation of the OprB transport system. This chain is Transcriptional regulatory protein GltR, found in Pseudomonas aeruginosa (strain ATCC 15692 / DSM 22644 / CIP 104116 / JCM 14847 / LMG 12228 / 1C / PRS 101 / PAO1).